The following is a 115-amino-acid chain: MRHSKTAISFFILVAVLGSQAGLIQDTVKEDRPFNPTIIHQGFQDSSDCCFSYASQIPCSRFIYYFPTSGGCTKPGIIFVTRKRKRVCANPSDQRVQTCISTLKLGPRSGNSAIA.

The signal sequence occupies residues 1–21 (MRHSKTAISFFILVAVLGSQA). Intrachain disulfides connect C49–C72, C50–C88, and C59–C99.

This sequence belongs to the intercrine beta (chemokine CC) family.

The protein localises to the secreted. The polypeptide is C-C motif chemokine 6 (Ccl6) (Rattus norvegicus (Rat)).